An 862-amino-acid polypeptide reads, in one-letter code: Valine--tRNA ligase (862 aa).

Positions 47-57 match the 'HIGH' region motif; the sequence is PTASGSLHIGH. The tract at residues 110-130 is disordered; the sequence is EPGLTPPFEGGDNKSSKAADQ. Basic and acidic residues predominate over residues 120–129; that stretch reads GDNKSSKAAD. The short motif at 584–588 is the 'KMSKS' region element; that stretch reads KMSKS. Lysine 587 serves as a coordination point for ATP.

The protein belongs to the class-I aminoacyl-tRNA synthetase family. ValS type 2 subfamily. As to quaternary structure, monomer.

It localises to the cytoplasm. The enzyme catalyses tRNA(Val) + L-valine + ATP = L-valyl-tRNA(Val) + AMP + diphosphate. In terms of biological role, catalyzes the attachment of valine to tRNA(Val). As ValRS can inadvertently accommodate and process structurally similar amino acids such as threonine, to avoid such errors, it has a 'posttransfer' editing activity that hydrolyzes mischarged Thr-tRNA(Val) in a tRNA-dependent manner. In Leifsonia xyli subsp. xyli (strain CTCB07), this protein is Valine--tRNA ligase.